A 103-amino-acid polypeptide reads, in one-letter code: MYAVIVTGGKQHKVTEGEFLKVEKLDIATGEAIDFDRVLLVANGDDVKIGLPVVEGAKVTAEVVSHGRHDKVRIIKFRRRKHHMKRQGHRQWFTEIKITGIQA.

This sequence belongs to the bacterial ribosomal protein bL21 family. Part of the 50S ribosomal subunit. Contacts protein L20.

This protein binds to 23S rRNA in the presence of protein L20. The polypeptide is Large ribosomal subunit protein bL21 (Pseudomonas paraeruginosa (strain DSM 24068 / PA7) (Pseudomonas aeruginosa (strain PA7))).